A 68-amino-acid chain; its full sequence is Elastase inhibitor AFLEI (68 aa).

Cysteine 5 and cysteine 67 are joined by a disulfide.

Its subcellular location is the secreted. Its function is as follows. Elastase inhibitor. Inhibitor of A.flavus elastase with a Ki of 40 nM. Inhibitor of A.fumigatus elastase and human leukocyte elastase. Inhibits the fibrinogenase and collagenase activities of A.flavus elastase. Does not inhibit porcine pancreatic elastase, trypsin, chymotrypsin, thrombin or A.acutus AC1-proteinase. The sequence is that of Elastase inhibitor AFLEI from Aspergillus flavus.